The chain runs to 102 residues: MNQYDLNLILNPNISAEQVQTEKDYIENAVRNAGAEISNLDDLGNRRLAYQVGKDREGYYLMYTIKASGNPETAIASSLRLRDNVRRVLVVKDRPEWKTKKA.

It belongs to the bacterial ribosomal protein bS6 family.

Functionally, binds together with bS18 to 16S ribosomal RNA. In Deinococcus radiodurans (strain ATCC 13939 / DSM 20539 / JCM 16871 / CCUG 27074 / LMG 4051 / NBRC 15346 / NCIMB 9279 / VKM B-1422 / R1), this protein is Small ribosomal subunit protein bS6 (rpsF).